The following is a 705-amino-acid chain: DNA polymerase alpha subunit B (705 aa).

The interval 115-199 is disordered; sequence KKRKLHGPFS…TPTTSRQNVP (85 aa). Polar residues predominate over residues 125–134; sequence LSDSKQTYNV. S126 bears the Phosphoserine mark. Residues 181–197 are compositionally biased toward low complexity; it reads STFQTPTTNTPTTSRQN.

This sequence belongs to the DNA polymerase alpha subunit B family. In terms of assembly, DNA polymerase alpha:primase is a four subunit enzyme complex, which is assembled throughout the cell cycle, and consists of the two DNA polymerase subunits A POL1 and B POL12, and the DNA primase large PRI2 and small PRI1 subunits. Subunit B POL12 binds to subunit A POL1. In terms of processing, phosphorylated in a cell cycle-dependent manner.

It is found in the nucleus. In terms of biological role, non-catalytic component of DNA polymerase alpha, which in a complex with DNA primase (DNA polymerase alpha:primase) constitutes a replicative polymerase. POL12 may play an essential role at the early stage of chromosomal DNA replication by coupling DNA polymerase alpha to the cellular replication machinery. Interacts with MCM10. The protein is DNA polymerase alpha subunit B (POL12) of Saccharomyces cerevisiae (strain ATCC 204508 / S288c) (Baker's yeast).